We begin with the raw amino-acid sequence, 121 residues long: Ribosome-binding factor A (121 aa).

It belongs to the RbfA family. As to quaternary structure, monomer. Binds 30S ribosomal subunits, but not 50S ribosomal subunits or 70S ribosomes.

It is found in the cytoplasm. Its function is as follows. One of several proteins that assist in the late maturation steps of the functional core of the 30S ribosomal subunit. Associates with free 30S ribosomal subunits (but not with 30S subunits that are part of 70S ribosomes or polysomes). Required for efficient processing of 16S rRNA. May interact with the 5'-terminal helix region of 16S rRNA. The sequence is that of Ribosome-binding factor A from Clostridium acetobutylicum (strain ATCC 824 / DSM 792 / JCM 1419 / IAM 19013 / LMG 5710 / NBRC 13948 / NRRL B-527 / VKM B-1787 / 2291 / W).